Consider the following 279-residue polypeptide: MAALGRPFSGLPLSGGSDFLQPPQPAFPGRAFPPGADGAELAPRPGPRAVPSSPAGSAARGRVSVHCKKKHKREEEEDDDCPVRKKRITEAELCAGPNDWILCAHQDVEGHGVNPSVSGLSIPGILDVICEEMDQTTGEPQCEVARRKLQEIEDRIIDEDEEVEADRNVNHLPSLVLSDTMKTGLKREFDEVFTKKMIESMSRPSMELVLWKPLPELLSDKPKPSSNTKNYTGESQAKHVAAGTAFPQRTELFSEPRPTGMSLYNSLETATSTEEEMEL.

Residues 1–82 (MAALGRPFSG…REEEEDDDCP (82 aa)) form a disordered region. Arg48 is subject to Omega-N-methylarginine. At Ser53 the chain carries Phosphoserine. Basic residues predominate over residues 63–72 (VSVHCKKKHK). A coiled-coil region spans residues 141 to 168 (QCEVARRKLQEIEDRIIDEDEEVEADRN). The interval 217–279 (LLSDKPKPSS…ATSTEEEMEL (63 aa)) is disordered. Polar residues-rich tracts occupy residues 224 to 235 (PSSNTKNYTGES) and 262 to 272 (SLYNSLETATS).

As to quaternary structure, interacts with CIAO2B; the interaction is direct. Interacts with MMS19; the interaction is indirect.

The protein resides in the cytoplasm. The protein localises to the cytoskeleton. It is found in the spindle. It localises to the nucleus. Facilitates DNA repair, cell cycle progression, and cell proliferation through its interaction with CIAO2B. This is Coiled-coil domain-containing protein 117 from Homo sapiens (Human).